Reading from the N-terminus, the 335-residue chain is Oligopeptide transport ATP-binding protein OppD (335 aa).

An ABC transporter domain is found at Leu18–Leu267. Gly54–Ser61 lines the ATP pocket.

This sequence belongs to the ABC transporter superfamily. The complex is composed of two ATP-binding proteins (OppD and OppF), two transmembrane proteins (OppB and OppC) and a solute-binding protein (OppA).

Its subcellular location is the cell inner membrane. The catalysed reaction is a [peptide](out) + ATP + H2O = a [peptide](in) + ADP + phosphate + H(+). It carries out the reaction L-alanyl-gamma-D-glutamyl-meso-2,6-diaminopimelate(out) + ATP + H2O = L-alanyl-gamma-D-glutamyl-meso-2,6-diaminopimelate(in) + ADP + phosphate + H(+). Functionally, part of the ABC transporter complex OppABCDF involved in the uptake of oligopeptides, including the cell wall murein tripeptide L-alanyl-gamma-D-glutamyl-meso-diaminopimelate. Responsible for energy coupling to the transport system. Plays an important nutritional role and is involved in the recycling of cell wall peptides. Binds ATP. The sequence is that of Oligopeptide transport ATP-binding protein OppD from Salmonella typhimurium (strain LT2 / SGSC1412 / ATCC 700720).